Here is a 951-residue protein sequence, read N- to C-terminus: Protein inturned (951 aa).

Disordered regions lie at residues Met-1 to Ser-32, Ser-189 to Leu-208, and Thr-687 to Gly-765. Residues His-187 to Thr-269 enclose the PDZ domain. Low complexity predominate over residues Pro-715–Thr-726. Positions Met-743–Ser-752 are enriched in basic and acidic residues. The span at Gly-754–Gly-765 shows a compositional bias: gly residues.

This sequence belongs to the inturned family. Interacts with fuz and wdpcp; fuz, intu and wdpcp probably form the core CPLANE (ciliogenesis and planar polarity effectors) complex. In terms of tissue distribution, expressed in the neural plate during neural tube closure with subsequent strong expression in the ventral neural tube and in facial mesenchyme.

Its subcellular location is the cell surface. It is found in the cell membrane. It localises to the cytoplasm. The protein resides in the cytoskeleton. The protein localises to the cilium basal body. Plays a role in the definition of cell polarity via the planar cell polarity (PCP) cascade. Required for ciliogenesis by controlling the organization of the apical actin cytoskeleton and the positioning of the basal bodies at the apical cell surface, which in turn is essential for the normal orientation of elongating ciliary microtubules. Proposed to function as core component of a functional module called CPLANE (ciliogenesis and planar polarity effectors) involved in recruitment of peripheral IFT-A proteins to basal bodies. Controls the localization of both rhoa and disheveled in multi-ciliated cells. Has an indirect effect on hedgehog signaling. The protein is Protein inturned of Xenopus laevis (African clawed frog).